The following is a 538-amino-acid chain: Cryptic outer membrane porin BglH (538 aa).

Residues 1 to 25 form the signal peptide; that stretch reads MFRRNLITSAILLMAPLAFSAQSLA. Residues 52 to 82 form a disordered region; sequence KDEEKKKYTPATVNRSVSTNDQGYAANPFPT. The segment covering 62–73 has biased composition (polar residues); that stretch reads ATVNRSVSTNDQ.

Belongs to the porin LamB (TC 1.B.3) family. As to quaternary structure, homomonomer; no physical evidence of a homotrimer has been found, however conductance experiments suggest it may be a homotrimer. The monomer probably consists of 18 antiparallel beta-strands.

It localises to the cell outer membrane. In terms of biological role, part of a cryptic operon that is poorly expressed in vivo. May be an ancestral sugar porin with a broad carbohydrate specificity; it binds aromatic beta-D-glucosides such as arbutin and salicin, but with low affinity compared to the binding of maltooligosaccharides to the LamB porin. This Escherichia coli (strain K12) protein is Cryptic outer membrane porin BglH (bglH).